The sequence spans 139 residues: Large ribosomal subunit protein uL22c (139 aa).

The protein belongs to the universal ribosomal protein uL22 family. Part of the 50S ribosomal subunit.

The protein resides in the plastid. Its subcellular location is the chloroplast. Its function is as follows. This protein binds specifically to 23S rRNA. In terms of biological role, the globular domain of the protein is located near the polypeptide exit tunnel on the outside of the subunit, while an extended beta-hairpin is found that lines the wall of the exit tunnel in the center of the 70S ribosome. This chain is Large ribosomal subunit protein uL22c (rpl22), found in Cycas taitungensis (Prince sago).